A 206-amino-acid chain; its full sequence is LexA repressor (206 aa).

The segment at residues 28 to 48 (VREIGEAVGLASSSTVHGHLS) is a DNA-binding region (H-T-H motif). Catalysis depends on for autocatalytic cleavage activity residues Ser-129 and Lys-167.

Belongs to the peptidase S24 family. In terms of assembly, homodimer.

It catalyses the reaction Hydrolysis of Ala-|-Gly bond in repressor LexA.. Its function is as follows. Represses a number of genes involved in the response to DNA damage (SOS response), including recA and lexA. In the presence of single-stranded DNA, RecA interacts with LexA causing an autocatalytic cleavage which disrupts the DNA-binding part of LexA, leading to derepression of the SOS regulon and eventually DNA repair. This chain is LexA repressor, found in Staphylococcus epidermidis (strain ATCC 35984 / DSM 28319 / BCRC 17069 / CCUG 31568 / BM 3577 / RP62A).